A 154-amino-acid polypeptide reads, in one-letter code: Probable chemoreceptor glutamine deamidase CheD (154 aa).

The protein belongs to the CheD family.

It carries out the reaction L-glutaminyl-[protein] + H2O = L-glutamyl-[protein] + NH4(+). Its function is as follows. Probably deamidates glutamine residues to glutamate on methyl-accepting chemotaxis receptors (MCPs), playing an important role in chemotaxis. The protein is Probable chemoreceptor glutamine deamidase CheD of Methanococcus vannielii (strain ATCC 35089 / DSM 1224 / JCM 13029 / OCM 148 / SB).